The sequence spans 328 residues: Sulfate adenylyltransferase subunit 2 (328 aa).

Disordered regions lie at residues 15-34 (AAPDLADLGGEPARARPSSH) and 304-328 (SEREGRVIDRDSTASMERKKAEGYF).

This sequence belongs to the PAPS reductase family. CysD subfamily. In terms of assembly, heterodimer composed of CysD, the smaller subunit, and CysN.

It catalyses the reaction sulfate + ATP + H(+) = adenosine 5'-phosphosulfate + diphosphate. It participates in sulfur metabolism; hydrogen sulfide biosynthesis; sulfite from sulfate: step 1/3. Functionally, with CysN forms the ATP sulfurylase (ATPS) that catalyzes the adenylation of sulfate producing adenosine 5'-phosphosulfate (APS) and diphosphate, the first enzymatic step in sulfur assimilation pathway. APS synthesis involves the formation of a high-energy phosphoric-sulfuric acid anhydride bond driven by GTP hydrolysis by CysN coupled to ATP hydrolysis by CysD. The sequence is that of Sulfate adenylyltransferase subunit 2 from Rhodopseudomonas palustris (strain BisA53).